We begin with the raw amino-acid sequence, 379 residues long: Cobalt-precorrin-5B C(1)-methyltransferase (379 aa).

This sequence belongs to the CbiD family.

The catalysed reaction is Co-precorrin-5B + S-adenosyl-L-methionine = Co-precorrin-6A + S-adenosyl-L-homocysteine. It participates in cofactor biosynthesis; adenosylcobalamin biosynthesis; cob(II)yrinate a,c-diamide from sirohydrochlorin (anaerobic route): step 6/10. In terms of biological role, catalyzes the methylation of C-1 in cobalt-precorrin-5B to form cobalt-precorrin-6A. This is Cobalt-precorrin-5B C(1)-methyltransferase from Salmonella dublin (strain CT_02021853).